A 406-amino-acid polypeptide reads, in one-letter code: uncharacterized protein (406 aa).

This is an uncharacterized protein from Acanthamoeba polyphaga mimivirus (APMV).